We begin with the raw amino-acid sequence, 302 residues long: RNA polymerase II holoenzyme cyclin-like subunit (302 aa).

The Cyclin N-terminal domain occupies 53–142 (QQLIKLGKRM…VGECEFSLIS (90 aa)).

This sequence belongs to the cyclin family. Cyclin C subfamily. As to quaternary structure, component of the srb8-11 complex, a regulatory module of the Mediator complex.

It localises to the nucleus. Its function is as follows. Component of the srb8-11 complex. The srb8-11 complex is a regulatory module of the Mediator complex which is itself involved in regulation of basal and activated RNA polymerase II-dependent transcription. The srb8-11 complex may be involved in the transcriptional repression of a subset of genes regulated by Mediator. It may inhibit the association of the Mediator complex with RNA polymerase II to form the holoenzyme complex. The srb8-11 complex phosphorylates the C-terminal domain (CTD) of the largest subunit of RNA polymerase II. This Emericella nidulans (strain FGSC A4 / ATCC 38163 / CBS 112.46 / NRRL 194 / M139) (Aspergillus nidulans) protein is RNA polymerase II holoenzyme cyclin-like subunit (ssn8).